A 231-amino-acid polypeptide reads, in one-letter code: ATP-dependent dethiobiotin synthetase BioD (231 aa).

13–18 (DVGKTV) contacts ATP. Thr-17 serves as a coordination point for Mg(2+). Residue Lys-38 is part of the active site. ATP contacts are provided by residues Asp-55, 116–119 (EGAG), and 176–177 (NR). The Mg(2+) site is built by Asp-55 and Glu-116.

This sequence belongs to the dethiobiotin synthetase family. As to quaternary structure, homodimer. It depends on Mg(2+) as a cofactor.

It is found in the cytoplasm. It catalyses the reaction (7R,8S)-7,8-diammoniononanoate + CO2 + ATP = (4R,5S)-dethiobiotin + ADP + phosphate + 3 H(+). It functions in the pathway cofactor biosynthesis; biotin biosynthesis; biotin from 7,8-diaminononanoate: step 1/2. Its function is as follows. Catalyzes a mechanistically unusual reaction, the ATP-dependent insertion of CO2 between the N7 and N8 nitrogen atoms of 7,8-diaminopelargonic acid (DAPA, also called 7,8-diammoniononanoate) to form a ureido ring. The sequence is that of ATP-dependent dethiobiotin synthetase BioD from Vibrio cholerae serotype O1 (strain ATCC 39315 / El Tor Inaba N16961).